The chain runs to 211 residues: 3-demethoxyubiquinol 3-hydroxylase (211 aa).

Positions 60, 90, 93, 142, 174, and 177 each coordinate Fe cation.

It belongs to the COQ7 family. The cofactor is Fe cation.

Its subcellular location is the cell membrane. The enzyme catalyses a 5-methoxy-2-methyl-3-(all-trans-polyprenyl)benzene-1,4-diol + AH2 + O2 = a 3-demethylubiquinol + A + H2O. It functions in the pathway cofactor biosynthesis; ubiquinone biosynthesis. In terms of biological role, catalyzes the hydroxylation of 2-nonaprenyl-3-methyl-6-methoxy-1,4-benzoquinol during ubiquinone biosynthesis. The polypeptide is 3-demethoxyubiquinol 3-hydroxylase (Francisella tularensis subsp. holarctica (strain FTNF002-00 / FTA)).